The primary structure comprises 396 residues: 3-amino-4-hydroxybenzoate 2-monooxygenase PtmB3 (396 aa).

Residues Ala19, 38–39, and Arg112 each bind FAD; that span reads EQ. The Proton acceptor role is filled by Tyr217. Position 295 (Asp295) interacts with FAD. Residues 352–371 form a disordered region; sequence RERGHEFHLPDGPQQRLRDR.

It belongs to the 6-hydroxynicotinate 3-monooxygenase family. FAD is required as a cofactor.

It carries out the reaction 3-amino-4-hydroxybenzoate + NADPH + O2 + H(+) = 3-amino-2,4-dihydroxybenzoate + NADP(+) + H2O. Its pathway is antibiotic biosynthesis. In terms of biological role, part of a gene cluster involved in the biosynthesis of thioplatensimycin (thioPTM) and platensimycin (PTM), potent and selective inhibitors of bacterial and mammalian fatty acid synthases. Catalyzes the hydroxylation of 3-amino-4-hydroxybenzoate (3,4-AHBA) to 3-amino-2,4-dihydroxybenzoate (3,2,4-ADHBA). This is 3-amino-4-hydroxybenzoate 2-monooxygenase PtmB3 from Streptomyces platensis.